We begin with the raw amino-acid sequence, 495 residues long: UDP-N-acetylmuramoyl-L-alanyl-D-glutamate--2,6-diaminopimelate ligase (495 aa).

UDP-N-acetyl-alpha-D-muramoyl-L-alanyl-D-glutamate is bound by residues Leu27, Ser29, and 44-46 (HQT). 116–122 (GTNGKTT) lines the ATP pocket. UDP-N-acetyl-alpha-D-muramoyl-L-alanyl-D-glutamate contacts are provided by residues Asn157, 158–159 (TT), Ser185, Gln191, and Arg193. The residue at position 225 (Lys225) is an N6-carboxylysine. Residues Arg390, 414-417 (DNPR), Gly465, and Glu469 contribute to the meso-2,6-diaminopimelate site. The Meso-diaminopimelate recognition motif motif lies at 414-417 (DNPR).

Belongs to the MurCDEF family. MurE subfamily. Requires Mg(2+) as cofactor. In terms of processing, carboxylation is probably crucial for Mg(2+) binding and, consequently, for the gamma-phosphate positioning of ATP.

The protein localises to the cytoplasm. It catalyses the reaction UDP-N-acetyl-alpha-D-muramoyl-L-alanyl-D-glutamate + meso-2,6-diaminopimelate + ATP = UDP-N-acetyl-alpha-D-muramoyl-L-alanyl-gamma-D-glutamyl-meso-2,6-diaminopimelate + ADP + phosphate + H(+). The protein operates within cell wall biogenesis; peptidoglycan biosynthesis. In terms of biological role, catalyzes the addition of meso-diaminopimelic acid to the nucleotide precursor UDP-N-acetylmuramoyl-L-alanyl-D-glutamate (UMAG) in the biosynthesis of bacterial cell-wall peptidoglycan. The protein is UDP-N-acetylmuramoyl-L-alanyl-D-glutamate--2,6-diaminopimelate ligase of Sodalis glossinidius (strain morsitans).